A 105-amino-acid chain; its full sequence is Small ribosomal subunit protein uS10 (105 aa).

This sequence belongs to the universal ribosomal protein uS10 family. Part of the 30S ribosomal subunit.

Functionally, involved in the binding of tRNA to the ribosomes. The protein is Small ribosomal subunit protein uS10 of Bdellovibrio bacteriovorus (strain ATCC 15356 / DSM 50701 / NCIMB 9529 / HD100).